We begin with the raw amino-acid sequence, 57 residues long: Large ribosomal subunit protein uL30 (57 aa).

This sequence belongs to the universal ribosomal protein uL30 family. As to quaternary structure, part of the 50S ribosomal subunit.

This is Large ribosomal subunit protein uL30 from Clostridium acetobutylicum (strain ATCC 824 / DSM 792 / JCM 1419 / IAM 19013 / LMG 5710 / NBRC 13948 / NRRL B-527 / VKM B-1787 / 2291 / W).